Reading from the N-terminus, the 385-residue chain is Putative transport protein BpOF4_00890 (385 aa).

A run of 8 helical transmembrane segments spans residues 42–62 (TIWI…ILPV), 63–83 (SLPL…VNAL), 93–113 (VAVM…GYYI), 191–211 (SIPG…LFML), 255–275 (IIIF…VALL), 276–296 (MAFI…VILA), 304–324 (IVGD…LLII), and 350–370 (LGLM…VIAF).

This sequence belongs to the autoinducer-2 exporter (AI-2E) (TC 2.A.86) family.

The protein localises to the cell membrane. The protein is Putative transport protein BpOF4_00890 of Alkalihalophilus pseudofirmus (strain ATCC BAA-2126 / JCM 17055 / OF4) (Bacillus pseudofirmus).